We begin with the raw amino-acid sequence, 511 residues long: Maturase K (511 aa).

Belongs to the intron maturase 2 family. MatK subfamily.

It localises to the plastid. The protein resides in the chloroplast. Its function is as follows. Usually encoded in the trnK tRNA gene intron. Probably assists in splicing its own and other chloroplast group II introns. This is Maturase K from Lolium perenne (Perennial ryegrass).